Reading from the N-terminus, the 157-residue chain is uncharacterized protein (157 aa).

The N-acetyltransferase domain maps to 9 to 147; the sequence is LLINYKTLDE…DFYVWHPEVN (139 aa).

This is an uncharacterized protein from Bacillus cereus (strain 03BB102).